Consider the following 430-residue polypeptide: Uric acid permease PucK (430 aa).

14 helical membrane-spanning segments follow: residues 18-38, 43-63, 67-87, 97-117, 122-142, 163-183, 185-205, 209-229, 233-253, 274-294, 310-330, 333-353, 369-389, and 398-418; these read MLAM…AIGL, LTYL…LQLW, YFGI…GPMI, AIYG…GFFG, FFPP…LIPT, LLGF…KGFI, SIAI…MGKV, EVLE…PPTF, AVVT…GVYF, AEGL…TAFS, VIAI…AAAL, VIPT…VISY, LLII…PALF, and VLAG…HAFF.

It belongs to the nucleobase:cation symporter-2 (NCS2) (TC 2.A.40) family.

The protein localises to the cell membrane. Uptake of uric acid. The chain is Uric acid permease PucK (pucK) from Bacillus subtilis (strain 168).